The primary structure comprises 355 residues: S-adenosylmethionine:tRNA ribosyltransferase-isomerase (355 aa).

It belongs to the QueA family. As to quaternary structure, monomer.

It is found in the cytoplasm. It carries out the reaction 7-aminomethyl-7-carbaguanosine(34) in tRNA + S-adenosyl-L-methionine = epoxyqueuosine(34) in tRNA + adenine + L-methionine + 2 H(+). It participates in tRNA modification; tRNA-queuosine biosynthesis. Its function is as follows. Transfers and isomerizes the ribose moiety from AdoMet to the 7-aminomethyl group of 7-deazaguanine (preQ1-tRNA) to give epoxyqueuosine (oQ-tRNA). The polypeptide is S-adenosylmethionine:tRNA ribosyltransferase-isomerase (Pectobacterium carotovorum subsp. carotovorum (strain PC1)).